An 841-amino-acid chain; its full sequence is Probable alpha-glucuronidase A (841 aa).

The signal sequence occupies residues 1-20; that stretch reads MRGLNLFQLILALLLSMVAA. 15 N-linked (GlcNAc...) asparagine glycosylation sites follow: asparagine 51, asparagine 76, asparagine 85, asparagine 149, asparagine 222, asparagine 279, asparagine 310, asparagine 343, asparagine 450, asparagine 465, asparagine 527, asparagine 576, asparagine 682, asparagine 723, and asparagine 732.

This sequence belongs to the glycosyl hydrolase 67 family.

The protein resides in the secreted. The enzyme catalyses an alpha-D-glucuronoside + H2O = D-glucuronate + an alcohol. Its function is as follows. Alpha-glucuronidase involved in the hydrolysis of xylan, a major structural heterogeneous polysaccharide found in plant biomass representing the second most abundant polysaccharide in the biosphere, after cellulose. Releases 4-O-methylglucuronic acid from xylan. This is Probable alpha-glucuronidase A (aguA) from Aspergillus niger (strain ATCC MYA-4892 / CBS 513.88 / FGSC A1513).